Here is a 60-residue protein sequence, read N- to C-terminus: UPF0434 protein Rfer_3156 (60 aa).

The protein belongs to the UPF0434 family.

The protein is UPF0434 protein Rfer_3156 of Albidiferax ferrireducens (strain ATCC BAA-621 / DSM 15236 / T118) (Rhodoferax ferrireducens).